Consider the following 626-residue polypeptide: Transketolase-like protein 2 (626 aa).

Residues S41, H78, and 124–126 (GSL) contribute to the thiamine diphosphate site. Position 156 (D156) interacts with Mg(2+). The thiamine diphosphate site is built by G157 and N186. Mg(2+) contacts are provided by N186 and L188. Thiamine diphosphate is bound by residues K248 and H262. The substrate site is built by H262 and S349. Residues E370 and F396 each contribute to the thiamine diphosphate site. E370 functions as the Proton donor in the catalytic mechanism. 2 residues coordinate substrate: H420 and D428. Residue Q432 participates in thiamine diphosphate binding.

The protein belongs to the transketolase family. In terms of assembly, homodimer. It depends on Mg(2+) as a cofactor. Requires Ca(2+) as cofactor. Mn(2+) is required as a cofactor. The cofactor is Co(2+). Thiamine diphosphate serves as cofactor. Overexpressed in hepatoma cancer cells.

The enzyme catalyses D-sedoheptulose 7-phosphate + D-glyceraldehyde 3-phosphate = aldehydo-D-ribose 5-phosphate + D-xylulose 5-phosphate. Functionally, plays an essential role in total transketolase activity and cell proliferation in cancer cells; after transfection with anti-TKTL1 siRNA, total transketolase activity dramatically decreases and proliferation was significantly inhibited in cancer cells. Plays a pivotal role in carcinogenesis. The polypeptide is Transketolase-like protein 2 (TKTL2) (Homo sapiens (Human)).